Consider the following 495-residue polypeptide: MRSAFILALGLITASADALVTRGAIEACLSAAGVPIDIPGTADYERDVEPFNIRLPYIPTAIAQTQTTAHIQSAVQCAKKLNLKVSAKSGGHSYASFGFGGENGHLMVQLDRMIDVISYNDKTGIAHVEPGARLGHLATVLNDKYGRAISHGTCPGVGISGHFAHGGFGFSSHMHGLAVDSVVGVTVVLADGRIVEASATENADLFWGIKGAGSNFGIVAVWKLATFPAPKVLTRFGVTLNWKNKTSALKGIEAVEDYARWVAPREVNFRIGDYGAGNPGIEGLYYGTPEQWRAAFQPLLDTLPAGYVVNPTTSLNWIESVLSYSNFDHVDFITPQPVENFYAKSLTLKSIKGDAVKNFVDYYFDVSNKVKDRFWFYQLDVHGGKNSQVTKVTNAETAYPHRDKLWLIQFYDRYDNNQTYPETSFKFLDGWVNSVTKALPKSDWGMYINYADPRMDRDYATKVYYGENLARLQKLKAKFDPTDRFYYPQAVRPVK.

A signal peptide spans 1 to 22; that stretch reads MRSAFILALGLITASADALVTR. Residues 55-229 form the FAD-binding PCMH-type domain; it reads LPYIPTAIAQ…AVWKLATFPA (175 aa). The 6-(S-cysteinyl)-8alpha-(pros-histidyl)-FAD (His-Cys) cross-link spans 92–154; it reads HSYASFGFGG…YGRAISHGTC (63 aa). N-linked (GlcNAc...) asparagine glycosylation is found at Asn-244 and Asn-417.

It belongs to the oxygen-dependent FAD-linked oxidoreductase family. The cofactor is FAD. Post-translationally, the FAD cofactor is bound via a bicovalent 6-S-cysteinyl, 8alpha-N1-histidyl FAD linkage.

It is found in the secreted. The enzyme catalyses beta-D-glucose + O2 = D-glucono-1,5-lactone + H2O2. It carries out the reaction D-galactose + O2 = D-galactono-1,5-lactone + H2O2. It catalyses the reaction D-cellobiose + O2 = D-cellobiono-1,5-lactone + H2O2. The catalysed reaction is beta-lactose + O2 = lactobiono-1,5-lactone + H2O2. The enzyme catalyses D-maltose + O2 = D-maltobiono-1,5-lactone + H2O2. It carries out the reaction D-xylose + O2 = D-xylono-1,5-lactone + H2O2. Catalyzes the selective oxidation of C1 hydroxyl moieties on mono-, oligo- and polysaccharides with concomitant reduction of molecular oxygen to hydrogen peroxide. This results in the formation of the corresponding lactones, which typically undergo spontaneous hydrolysis. Carbohydrate oxidase is able to oxidize a variety of substrates including D-glucose, D-galactose, D-xylose, D-maltose, D-cellobiose, and lactose. In addition, among various oligosaccharides, the enzyme preferred tetrameric dextrins, indicating a favorable interaction of four linked glucose units with the substrate binding pocket. The protein is Carbohydrate oxidase of Microdochium nivale (Pink snow mold).